A 2325-amino-acid chain; its full sequence is Otogelin-like protein (2325 aa).

The first 22 residues, 1–22 (MVPWRALSLPILLVSLRGYVCA), serve as a signal peptide directing secretion. The region spanning 112 to 288 (GICKTWGQYH…VLTPDDTKCV (177 aa)) is the VWFD 1 domain. 2 cysteine pairs are disulfide-bonded: Cys114/Cys248 and Cys136/Cys287. Residue Asn425 is glycosylated (N-linked (GlcNAc...) asparagine). A VWFD 2 domain is found at 472-645 (VQCSVVGDSH…HAWRVSSTCF (174 aa)). 3 cysteine pairs are disulfide-bonded: Cys474–Cys609, Cys496–Cys644, and Cys518–Cys526. The 56-residue stretch at 736–791 (CQKGMLYHHCSSLCLRSCTSLSSPEQCKDDCAEGCNCPEGKFYEETLNFCVPIYHC) folds into the TIL 1 domain. Residues Asn817 and Asn867 are each glycosylated (N-linked (GlcNAc...) asparagine). Residues 937–1114 (AVCTVYGDRH…DLMEALKPCE (178 aa)) enclose the VWFD 3 domain. Disulfide bonds link Cys939/Cys1069, Cys961/Cys1113, and Cys983/Cys990. N-linked (GlcNAc...) asparagine glycosylation occurs at Asn1280. A TIL 2 domain is found at 1366-1418 (RYEPCATPCFKTCSDPEALACTFLPPVEGCLPYCPKNMILDETTLKCVHPEDC). One can recognise a VWFD 4 domain in the interval 1506–1695 (CRCSMLSELS…SWEIEKSFEV (190 aa)). Disulfide bonds link Cys1508/Cys1655 and Cys1549/Cys1571. Residues Asn1576 and Asn2170 are each glycosylated (N-linked (GlcNAc...) asparagine). 4 disulfide bridges follow: Cys2233–Cys2289, Cys2254–Cys2303, Cys2265–Cys2320, and Cys2269–Cys2322. The 93-residue stretch at 2233–2325 (CKREERICQK…EPIDCTCQWN (93 aa)) folds into the CTCK domain. The N-linked (GlcNAc...) asparagine glycan is linked to Asn2296.

It belongs to the otogelin family.

It is found in the secreted. The chain is Otogelin-like protein (Otogl) from Mus musculus (Mouse).